Here is a 237-residue protein sequence, read N- to C-terminus: Pyridoxal phosphate homeostasis protein (237 aa).

N6-(pyridoxal phosphate)lysine is present on Lys-31.

It belongs to the pyridoxal phosphate-binding protein YggS/PROSC family.

Its subcellular location is the cytoplasm. It localises to the nucleus. In terms of biological role, pyridoxal 5'-phosphate (PLP)-binding protein, which may be involved in intracellular homeostatic regulation of pyridoxal 5'-phosphate (PLP), the active form of vitamin B6. This chain is Pyridoxal phosphate homeostasis protein, found in Schizosaccharomyces pombe (strain 972 / ATCC 24843) (Fission yeast).